A 153-amino-acid chain; its full sequence is ATP synthase subunit b' (153 aa).

The helical transmembrane segment at 23 to 40 (LMAIQVVALTYILNSLFF) threads the bilayer.

Belongs to the ATPase B chain family. In terms of assembly, F-type ATPases have 2 components, F(1) - the catalytic core - and F(0) - the membrane proton channel. F(1) has five subunits: alpha(3), beta(3), gamma(1), delta(1), epsilon(1). F(0) has four main subunits: a(1), b(1), b'(1) and c(10-14). The alpha and beta chains form an alternating ring which encloses part of the gamma chain. F(1) is attached to F(0) by a central stalk formed by the gamma and epsilon chains, while a peripheral stalk is formed by the delta, b and b' chains.

The protein localises to the cellular thylakoid membrane. In terms of biological role, f(1)F(0) ATP synthase produces ATP from ADP in the presence of a proton or sodium gradient. F-type ATPases consist of two structural domains, F(1) containing the extramembraneous catalytic core and F(0) containing the membrane proton channel, linked together by a central stalk and a peripheral stalk. During catalysis, ATP synthesis in the catalytic domain of F(1) is coupled via a rotary mechanism of the central stalk subunits to proton translocation. Component of the F(0) channel, it forms part of the peripheral stalk, linking F(1) to F(0). The b'-subunit is a diverged and duplicated form of b found in plants and photosynthetic bacteria. The chain is ATP synthase subunit b' from Prochlorococcus marinus (strain MIT 9215).